A 356-amino-acid polypeptide reads, in one-letter code: Staphylococcal superantigen-like 3 (356 aa).

Residues 1–30 form the signal peptide; the sequence is MKMRTIAKTSLALGLLTTGAITVTTQSVKA. Residues 61–165 form a disordered region; that stretch reads ATTQAANTRQ…TIKQAQTDMT (105 aa). A compositionally biased stretch (basic and acidic residues) spans 69 to 104; sequence RQERTPKLEKAPNTNEEKTSASKIEKISQPKQEEQK. Low complexity predominate over residues 114-141; it reads PKQEQSQTTTESTTPKTKVTTPPSTNTP. Polar residues predominate over residues 142–164; it reads QPMQSTKSDTPQSPTIKQAQTDM. Residues 228–326 form a sialyl Lewis X-binding region; the sequence is IDVFIVLEDN…VIKMKNGGKY (99 aa).

The protein belongs to the staphylococcal/streptococcal toxin family. In terms of assembly, interacts with host TLR2 (via its extracellular domain).

Its subcellular location is the secreted. Secreted protein that plays an essential role in immune innate response inhibition by interacting with and inhibiting host TLR2. In turn, bacteria recognition by immune cells is impaired and cytokine production is inhibited. Mechanistically, by interacting with TLR2, blocks ligand binding and thus inhibits activation. Second, by interacting with an already formed TLR2-lipopeptide complex, prevents TLR heterodimerization and downstream signaling. The interaction with host TLR2 does not involve sialyl Lewis X interactions. This chain is Staphylococcal superantigen-like 3, found in Staphylococcus aureus (strain NCTC 8325 / PS 47).